Reading from the N-terminus, the 128-residue chain is Large ribosomal subunit protein bL12 (128 aa).

In terms of assembly, homodimer. Part of the 50S ribosomal subunit; present in 6 copies per ribosome. Forms part of the ribosomal stalk which helps the ribosome interact with GTP-bound translation factors. Forms a heptameric L10(L12)2(L12)2(L12)2 complex, where L10 forms an elongated spine to which 3 L12 dimers bind in a sequential fashion.

Its function is as follows. Forms part of the ribosomal stalk which helps the ribosome interact with GTP-bound translation factors. Is thus essential for accurate translation. This Thermotoga maritima (strain ATCC 43589 / DSM 3109 / JCM 10099 / NBRC 100826 / MSB8) protein is Large ribosomal subunit protein bL12.